Consider the following 797-residue polypeptide: Protocadherin beta-11 (797 aa).

The signal sequence occupies residues 1-26 (MENQGTRTQQIRQVLLLFVLLGMSQA). The Extracellular segment spans residues 27-690 (GSETWSFSVA…AQADSLTVYL (664 aa)). 5 Cadherin domains span residues 35–133 (VAEE…SPIF), 138–242 (MLLE…SPEF), 247–347 (YEVK…APEI), 352–451 (ITSP…APTF), and 456–561 (YTLF…SPFV). N-linked (GlcNAc...) asparagine glycans are attached at residues Asn-418, Asn-436, Asn-487, and Asn-567. Residues 568–671 (GSAPCTELVP…LVDGFSQPYL (104 aa)) enclose the Cadherin 6 domain. The helical transmembrane segment at 691–711 (VVALASVSSLFLFSVLLFVAV) threads the bilayer. Residues 712-797 (RLCRRSRAAS…TFRNSFGFNF (86 aa)) are Cytoplasmic-facing.

The protein resides in the cell membrane. Potential calcium-dependent cell-adhesion protein. May be involved in the establishment and maintenance of specific neuronal connections in the brain. The chain is Protocadherin beta-11 (PCDHB11) from Homo sapiens (Human).